The chain runs to 546 residues: Chaperonin GroEL (546 aa).

Residues 30–33 (TLGP), lysine 51, 87–91 (DGTTT), glycine 415, 479–481 (NAA), and aspartate 495 contribute to the ATP site.

The protein belongs to the chaperonin (HSP60) family. As to quaternary structure, forms a cylinder of 14 subunits composed of two heptameric rings stacked back-to-back. Interacts with the co-chaperonin GroES.

The protein resides in the cytoplasm. It carries out the reaction ATP + H2O + a folded polypeptide = ADP + phosphate + an unfolded polypeptide.. Its function is as follows. Together with its co-chaperonin GroES, plays an essential role in assisting protein folding. The GroEL-GroES system forms a nano-cage that allows encapsulation of the non-native substrate proteins and provides a physical environment optimized to promote and accelerate protein folding. The polypeptide is Chaperonin GroEL (Xanthomonas campestris pv. phaseoli).